The sequence spans 185 residues: Ribosome-recycling factor (185 aa).

Residues 145–164 (DGEAGEDEVSRAEKDLDKTT) form a disordered region.

This sequence belongs to the RRF family.

It localises to the cytoplasm. Responsible for the release of ribosomes from messenger RNA at the termination of protein biosynthesis. May increase the efficiency of translation by recycling ribosomes from one round of translation to another. This chain is Ribosome-recycling factor, found in Mycobacterium sp. (strain JLS).